Reading from the N-terminus, the 400-residue chain is Phosphoglycerate kinase (400 aa).

Substrate contacts are provided by residues 22–24 (DFN), arginine 38, 61–64 (HLGR), arginine 119, and arginine 152. ATP is bound by residues lysine 205, glycine 296, glutamate 327, and 353 to 356 (GGDT).

It belongs to the phosphoglycerate kinase family. In terms of assembly, monomer.

The protein resides in the cytoplasm. The enzyme catalyses (2R)-3-phosphoglycerate + ATP = (2R)-3-phospho-glyceroyl phosphate + ADP. Its pathway is carbohydrate degradation; glycolysis; pyruvate from D-glyceraldehyde 3-phosphate: step 2/5. The polypeptide is Phosphoglycerate kinase (Campylobacter jejuni subsp. jejuni serotype O:2 (strain ATCC 700819 / NCTC 11168)).